Here is a 277-residue protein sequence, read N- to C-terminus: 2-dehydro-3-deoxyphosphooctonate aldolase (277 aa).

It belongs to the KdsA family.

It localises to the cytoplasm. It carries out the reaction D-arabinose 5-phosphate + phosphoenolpyruvate + H2O = 3-deoxy-alpha-D-manno-2-octulosonate-8-phosphate + phosphate. It participates in carbohydrate biosynthesis; 3-deoxy-D-manno-octulosonate biosynthesis; 3-deoxy-D-manno-octulosonate from D-ribulose 5-phosphate: step 2/3. It functions in the pathway bacterial outer membrane biogenesis; lipopolysaccharide biosynthesis. The protein is 2-dehydro-3-deoxyphosphooctonate aldolase of Alkalilimnicola ehrlichii (strain ATCC BAA-1101 / DSM 17681 / MLHE-1).